We begin with the raw amino-acid sequence, 638 residues long: Lactose permease (638 aa).

Residues 1-470 form a permease region; sequence MHNHKVSGKQ…AQVIEELKSK (470 aa). 12 helical membrane-spanning segments follow: residues 27 to 47, 56 to 76, 94 to 114, 121 to 141, 166 to 186, 204 to 224, 261 to 281, 291 to 311, 320 to 340, 343 to 363, 395 to 415, and 429 to 449; these read FYGV…FSGL, IGLI…IDPI, WILI…TGIF, WILF…FYSL, LGAF…VPLV, WFAF…IVCF, LAYL…FYMY, FWVV…SFPV, WLFI…IFGH, VFLM…LVTV, FAGA…GMTG, and TFNM…IVVF. The PTS EIIA type-1 domain maps to 503 to 610; sequence SSVVDEDGKP…KDTIVIFYTQ (108 aa). His558 carries the phosphohistidine; by HPr modification.

The protein in the N-terminal section; belongs to the sodium:galactoside symporter (TC 2.A.2) family.

It localises to the cell membrane. In terms of biological role, responsible for transport of beta-galactosides into the cell, with the concomitant uptake of protons (symport system), and also for transport of homologous and heterologous exchange of beta-galactosides. In Lactobacillus helveticus (Lactobacillus suntoryeus), this protein is Lactose permease (lacS).